The sequence spans 1026 residues: Retinoblastoma-related protein 1 (1026 aa).

Residues 416–616 (TPVSTAMTTA…EKGSSMYNSL (201 aa)) form a domain A region. The tract at residues 416-872 (TPVSTAMTTA…NEVFIPSVKP (457 aa)) is pocket. The interval 617–737 (AVARPALSVE…PGGGGETCAE (121 aa)) is spacer. Residues 656–680 (PVPSLPKPEPMSAQNGDPRSPKRPC) are disordered. The segment at 738-872 (TGISVFFSKI…NEVFIPSVKP (135 aa)) is domain B. The segment at 1007–1026 (QNGSSASSSGAPLKSEQPDS) is disordered.

The protein belongs to the retinoblastoma protein (RB) family.

It is found in the nucleus. Functionally, regulator of biological processes that recruits a histone deacetylase to control gene transcription. May play a role in the entry into mitosis, negatively regulating the cell proliferation. Formation of stable complexes with geminiviridae replication-associated proteins may create a cellular environment which favors viral DNA replication. The sequence is that of Retinoblastoma-related protein 1 (RBR1) from Pisum sativum (Garden pea).